Reading from the N-terminus, the 286-residue chain is MIAITGATGQLGHYVIESLMKTVPASQIVAIVRNPAKAQALAAQGITVRQADYGDEAALTSALQGVEKLLLISSSEVGQRAPQHRNVINAAKAAGVKFIAYTSLLHADTSPLGLADEHIETEKMLADSGIVYTLLRNGWYSENYLASAPAALEHGVFIGAAGDGKIASATRADYAAAAARVISEAGHEGKVYELAGDSAWTLTQLAAELTKQSGKQVTYQNLSEADFAAALKSVGLPDGLADMLADSDVGASKGGLFDDSKTLSKLIGHPTTTLAESVSHLFNVNN.

Residues 6–11, arginine 33, 73–75, 138–143, and arginine 171 each bind NADP(+); these read GATGQL, SSS, and GWYSEN.

This sequence belongs to the NmrA-type oxidoreductase family. In terms of assembly, monomer.

The enzyme catalyses a quinone + NADH + H(+) = a quinol + NAD(+). It carries out the reaction a quinone + NADPH + H(+) = a quinol + NADP(+). In terms of biological role, quinone oxidoreductase that may play some additional role beyond quinone reduction. Potential redox sensor protein. Overexpression induces retardation of growth. The chain is Quinone oxidoreductase 2 (qorB) from Escherichia coli (strain K12).